The following is a 276-amino-acid chain: Adenylyl-sulfate kinase 1, chloroplastic (276 aa).

Residues 1-38 constitute a chloroplast transit peptide; the sequence is MIAAGAKSLLGLSMASPKGIFDSNSMSNSRSVVVVRAC. Positions 46–74 are disordered; sequence TLSHNKNGSIPEVKSINGHTGQKQGPLST. Over residues 62–74 the composition is skewed to polar residues; that stretch reads NGHTGQKQGPLST. 108–116 contacts ATP; that stretch reads GLSGSGKST. Substrate-binding positions include D138, R141, R155, N158, 181 to 182, and G231; that span reads IS. S182 serves as the catalytic Phosphoserine intermediate.

The protein belongs to the APS kinase family. Homodimer; disulfide-linked. Interacts with APK2. In terms of tissue distribution, expressed in root vasculature, root tips, leaf epidermal and guard cells, pollen grains and funiculus of developing seeds.

The protein localises to the plastid. It localises to the chloroplast. The enzyme catalyses adenosine 5'-phosphosulfate + ATP = 3'-phosphoadenylyl sulfate + ADP + H(+). It functions in the pathway sulfur metabolism; hydrogen sulfide biosynthesis; sulfite from sulfate: step 2/3. Functionally, catalyzes the synthesis of activated sulfate. Essential for plant reproduction and viability. Required for the production of glucosinolates. The protein is Adenylyl-sulfate kinase 1, chloroplastic (APK1) of Arabidopsis thaliana (Mouse-ear cress).